Reading from the N-terminus, the 508-residue chain is Putative glycosyl hydrolase ecdF (508 aa).

A signal peptide spans 1–15; the sequence is MFLHILCLLAGQALA. Asn-99, Asn-122, Asn-275, and Asn-362 each carry an N-linked (GlcNAc...) asparagine glycan.

Belongs to the glycosyl hydrolase 32 family.

The chain is Putative glycosyl hydrolase ecdF from Aspergillus rugulosus (Emericella rugulosa).